The sequence spans 130 residues: Arsenical-resistance protein 2 (130 aa).

One can recognise a Rhodanese domain in the interval 17–124; sequence QRKDFQVVDL…WETHCRESNL (108 aa).

In terms of biological role, involved in resistance to arsenic compounds. The polypeptide is Arsenical-resistance protein 2 (ARR2) (Saccharomyces cerevisiae (strain ATCC 204508 / S288c) (Baker's yeast)).